A 262-amino-acid chain; its full sequence is Acyl-[acyl-carrier-protein]--UDP-N-acetylglucosamine O-acyltransferase (262 aa).

Belongs to the transferase hexapeptide repeat family. LpxA subfamily. In terms of assembly, homotrimer.

The protein localises to the cytoplasm. The enzyme catalyses a (3R)-hydroxyacyl-[ACP] + UDP-N-acetyl-alpha-D-glucosamine = a UDP-3-O-[(3R)-3-hydroxyacyl]-N-acetyl-alpha-D-glucosamine + holo-[ACP]. The protein operates within glycolipid biosynthesis; lipid IV(A) biosynthesis; lipid IV(A) from (3R)-3-hydroxytetradecanoyl-[acyl-carrier-protein] and UDP-N-acetyl-alpha-D-glucosamine: step 1/6. Functionally, involved in the biosynthesis of lipid A, a phosphorylated glycolipid that anchors the lipopolysaccharide to the outer membrane of the cell. The protein is Acyl-[acyl-carrier-protein]--UDP-N-acetylglucosamine O-acyltransferase of Burkholderia vietnamiensis (strain G4 / LMG 22486) (Burkholderia cepacia (strain R1808)).